The primary structure comprises 174 residues: Small ribosomal subunit protein bS16 (174 aa).

A disordered region spans residues 81–174; sequence QRFTGEPAPP…DATTDATPSA (94 aa). Positions 87-97 are enriched in pro residues; it reads PAPPPMKTAPP. Residues 98-118 are compositionally biased toward basic and acidic residues; that stretch reads KPDKKALFEAAAKEAAGEPRA. Low complexity predominate over residues 135 to 158; that stretch reads ETTPAAEAAPDAAASADEPAGGAS. A compositionally biased stretch (polar residues) spans 160 to 174; it reads AAESQDATTDATPSA.

The protein belongs to the bacterial ribosomal protein bS16 family.

The chain is Small ribosomal subunit protein bS16 from Acidothermus cellulolyticus (strain ATCC 43068 / DSM 8971 / 11B).